Reading from the N-terminus, the 161-residue chain is Insulin-like growth factor 1, juvenile form (161 aa).

The b stretch occupies residues 45–73; that stretch reads GPETLCGAELVDTLQFVCGDRGFYFSKPT. Intrachain disulfides connect C50/C92, C62/C105, and C91/C96. Residues 74 to 85 form a c region; that stretch reads GYGPSSRRSHNR. The interval 86-106 is a; sequence GIVDECCFQSCELRRLEMYCA. The segment at 107–114 is d; the sequence is PVKPGKTP. Residues 111–161 are disordered; the sequence is GKTPRSVRAQRHTDSPRTAKKPLPGQSHSSYKEVHQKNSSRGNTGGRNYRI. Positions 115-161 are cleaved as a propeptide — e peptide; it reads RSVRAQRHTDSPRTAKKPLPGQSHSSYKEVHQKNSSRGNTGGRNYRI.

This sequence belongs to the insulin family.

It is found in the secreted. In terms of biological role, the insulin-like growth factors, isolated from plasma, are structurally and functionally related to insulin but have a much higher growth-promoting activity. Acts as a ligand for IGF1R. Binds to the alpha subunit of IGF1R, leading to the activation of the intrinsic tyrosine kinase activity which autophosphorylates tyrosine residues in the beta subunit thus initiatiating a cascade of down-stream signaling events leading to activation of the PI3K-AKT/PKB and the Ras-MAPK pathways. Binds to integrins. Its binding to integrins and subsequent ternary complex formation with integrins and IGFR1 are essential for IGF1 signaling. The chain is Insulin-like growth factor 1, juvenile form from Cyprinus carpio (Common carp).